A 426-amino-acid chain; its full sequence is 3-phosphoshikimate 1-carboxyvinyltransferase (426 aa).

Lys-22, Ser-23, and Arg-27 together coordinate 3-phosphoshikimate. Residue Lys-22 participates in phosphoenolpyruvate binding. Phosphoenolpyruvate is bound by residues Gly-96 and Arg-124. 7 residues coordinate 3-phosphoshikimate: Ser-170, Ser-171, Gln-172, Ser-198, Asp-314, Asn-337, and Lys-341. Position 172 (Gln-172) interacts with phosphoenolpyruvate. The Proton acceptor role is filled by Asp-314. Positions 345, 387, and 412 each coordinate phosphoenolpyruvate.

Belongs to the EPSP synthase family. In terms of assembly, monomer.

It localises to the cytoplasm. The catalysed reaction is 3-phosphoshikimate + phosphoenolpyruvate = 5-O-(1-carboxyvinyl)-3-phosphoshikimate + phosphate. The protein operates within metabolic intermediate biosynthesis; chorismate biosynthesis; chorismate from D-erythrose 4-phosphate and phosphoenolpyruvate: step 6/7. Its function is as follows. Catalyzes the transfer of the enolpyruvyl moiety of phosphoenolpyruvate (PEP) to the 5-hydroxyl of shikimate-3-phosphate (S3P) to produce enolpyruvyl shikimate-3-phosphate and inorganic phosphate. This Shewanella halifaxensis (strain HAW-EB4) protein is 3-phosphoshikimate 1-carboxyvinyltransferase.